A 172-amino-acid polypeptide reads, in one-letter code: Shikimate kinase (172 aa).

11–16 (GCGKST) serves as a coordination point for ATP. Ser-15 serves as a coordination point for Mg(2+). Residues Asp-33, Arg-57, and Gly-80 each coordinate substrate. Arg-120 is an ATP binding site. Arg-142 serves as a coordination point for substrate. Residue Arg-158 participates in ATP binding.

The protein belongs to the shikimate kinase family. As to quaternary structure, monomer. It depends on Mg(2+) as a cofactor.

The protein localises to the cytoplasm. The enzyme catalyses shikimate + ATP = 3-phosphoshikimate + ADP + H(+). The protein operates within metabolic intermediate biosynthesis; chorismate biosynthesis; chorismate from D-erythrose 4-phosphate and phosphoenolpyruvate: step 5/7. Catalyzes the specific phosphorylation of the 3-hydroxyl group of shikimic acid using ATP as a cosubstrate. The chain is Shikimate kinase from Flavobacterium johnsoniae (strain ATCC 17061 / DSM 2064 / JCM 8514 / BCRC 14874 / CCUG 350202 / NBRC 14942 / NCIMB 11054 / UW101) (Cytophaga johnsonae).